We begin with the raw amino-acid sequence, 296 residues long: Ribonuclease HIII (296 aa).

Residues 80-296 enclose the RNase H type-2 domain; sequence LALIGSDEVG…NTKKAYQRLK (217 aa). 3 residues coordinate a divalent metal cation: D86, E87, and D191.

It belongs to the RNase HII family. RnhC subfamily. Mn(2+) is required as a cofactor. Requires Mg(2+) as cofactor.

It localises to the cytoplasm. The enzyme catalyses Endonucleolytic cleavage to 5'-phosphomonoester.. In terms of biological role, endonuclease that specifically degrades the RNA of RNA-DNA hybrids. The chain is Ribonuclease HIII from Streptococcus thermophilus (strain ATCC BAA-491 / LMD-9).